A 315-amino-acid chain; its full sequence is Protease HtpX homolog (315 aa).

Residues 16–36 (LFMGIGYLIGGASGALIALVV) form a helical membrane-spanning segment. Residue histidine 130 participates in Zn(2+) binding. Glutamate 131 is an active-site residue. Histidine 134 contacts Zn(2+). 2 helical membrane passes run 145–165 (ITAT…FFGG) and 172–192 (GPGL…AMLV). Glutamate 201 contacts Zn(2+). Positions 282–315 (GGGGASIGRPAGPSPRGAPRSPWSGQPRARGPWG) are disordered. Low complexity predominate over residues 288–303 (IGRPAGPSPRGAPRSP).

It belongs to the peptidase M48B family. Zn(2+) is required as a cofactor.

The protein resides in the cell inner membrane. This Rhodopseudomonas palustris (strain BisB5) protein is Protease HtpX homolog.